A 273-amino-acid polypeptide reads, in one-letter code: NAD-dependent protein deacylase (273 aa).

Positions 20-272 (RERLRQRIFF…PEFVEKLLKG (253 aa)) constitute a Deacetylase sirtuin-type domain. 48–67 (GAGISAESGIRTFRAADGLW) provides a ligand contact to NAD(+). Residues tyrosine 92 and arginine 95 each coordinate substrate. 129-132 (QNID) is an NAD(+) binding site. Residue histidine 147 is the Proton acceptor of the active site. The Zn(2+) site is built by cysteine 155 and cysteine 174. NAD(+)-binding positions include 214–216 (GTS), 240–242 (NLE), and alanine 258.

This sequence belongs to the sirtuin family. Class III subfamily. Zn(2+) serves as cofactor.

The protein localises to the cytoplasm. It catalyses the reaction N(6)-acetyl-L-lysyl-[protein] + NAD(+) + H2O = 2''-O-acetyl-ADP-D-ribose + nicotinamide + L-lysyl-[protein]. The catalysed reaction is N(6)-succinyl-L-lysyl-[protein] + NAD(+) + H2O = 2''-O-succinyl-ADP-D-ribose + nicotinamide + L-lysyl-[protein]. It carries out the reaction N(6)-(2-hydroxyisobutanoyl)-L-lysyl-[protein] + NAD(+) + H2O = 2''-O-(2-hydroxyisobutanoyl)-ADP-D-ribose + nicotinamide + L-lysyl-[protein]. In terms of biological role, NAD-dependent lysine deacetylase that specifically removes acetyl groups on target proteins. Also acts as a protein-lysine deacylase by mediating protein desuccinylation and de-2-hydroxyisobutyrylation. Modulates the activities of several proteins which are inactive in their acylated form. The chain is NAD-dependent protein deacylase from Escherichia coli O157:H7.